A 357-amino-acid chain; its full sequence is tRNA-specific 2-thiouridylase MnmA (357 aa).

Residues 6–13 (AMSGGVDS) and leucine 32 each bind ATP. The active-site Nucleophile is cysteine 101. A disulfide bridge links cysteine 101 with cysteine 193. ATP is bound at residue glycine 125. Positions 143–145 (KDQ) are interaction with tRNA. Cysteine 193 (cysteine persulfide intermediate) is an active-site residue.

Belongs to the MnmA/TRMU family.

The protein resides in the cytoplasm. It carries out the reaction S-sulfanyl-L-cysteinyl-[protein] + uridine(34) in tRNA + AH2 + ATP = 2-thiouridine(34) in tRNA + L-cysteinyl-[protein] + A + AMP + diphosphate + H(+). Catalyzes the 2-thiolation of uridine at the wobble position (U34) of tRNA, leading to the formation of s(2)U34. In Mycolicibacterium gilvum (strain PYR-GCK) (Mycobacterium gilvum (strain PYR-GCK)), this protein is tRNA-specific 2-thiouridylase MnmA.